A 282-amino-acid chain; its full sequence is Putative hydrolase Bcenmc03_4750 (282 aa).

Residues E124, E126, and D155 each coordinate Mg(2+).

This sequence belongs to the FAH family. Mg(2+) serves as cofactor.

The chain is Putative hydrolase Bcenmc03_4750 from Burkholderia orbicola (strain MC0-3).